The chain runs to 174 residues: ATP-dependent protease subunit HslV (174 aa).

Residue T2 is part of the active site. 3 residues coordinate Na(+): A157, C160, and T163.

The protein belongs to the peptidase T1B family. HslV subfamily. A double ring-shaped homohexamer of HslV is capped on each side by a ring-shaped HslU homohexamer. The assembly of the HslU/HslV complex is dependent on binding of ATP.

It localises to the cytoplasm. It catalyses the reaction ATP-dependent cleavage of peptide bonds with broad specificity.. With respect to regulation, allosterically activated by HslU binding. Protease subunit of a proteasome-like degradation complex believed to be a general protein degrading machinery. This Shewanella baltica (strain OS195) protein is ATP-dependent protease subunit HslV.